Here is a 365-residue protein sequence, read N- to C-terminus: Sulfate/thiosulfate import ATP-binding protein CysA (365 aa).

Residues 3–237 (IEIANIKKSF…PATRFVLEFM (235 aa)) form the ABC transporter domain. 35 to 42 (GPSGSGKT) contacts ATP.

It belongs to the ABC transporter superfamily. Sulfate/tungstate importer (TC 3.A.1.6) family. As to quaternary structure, the complex is composed of two ATP-binding proteins (CysA), two transmembrane proteins (CysT and CysW) and a solute-binding protein (CysP).

It localises to the cell inner membrane. It carries out the reaction sulfate(out) + ATP + H2O = sulfate(in) + ADP + phosphate + H(+). The catalysed reaction is thiosulfate(out) + ATP + H2O = thiosulfate(in) + ADP + phosphate + H(+). In terms of biological role, part of the ABC transporter complex CysAWTP involved in sulfate/thiosulfate import. Responsible for energy coupling to the transport system. The chain is Sulfate/thiosulfate import ATP-binding protein CysA from Escherichia coli O6:H1 (strain CFT073 / ATCC 700928 / UPEC).